The following is a 479-amino-acid chain: Aspartyl/glutamyl-tRNA(Asn/Gln) amidotransferase subunit B (479 aa).

The protein belongs to the GatB/GatE family. GatB subfamily. In terms of assembly, heterotrimer of A, B and C subunits.

The catalysed reaction is L-glutamyl-tRNA(Gln) + L-glutamine + ATP + H2O = L-glutaminyl-tRNA(Gln) + L-glutamate + ADP + phosphate + H(+). The enzyme catalyses L-aspartyl-tRNA(Asn) + L-glutamine + ATP + H2O = L-asparaginyl-tRNA(Asn) + L-glutamate + ADP + phosphate + 2 H(+). Allows the formation of correctly charged Asn-tRNA(Asn) or Gln-tRNA(Gln) through the transamidation of misacylated Asp-tRNA(Asn) or Glu-tRNA(Gln) in organisms which lack either or both of asparaginyl-tRNA or glutaminyl-tRNA synthetases. The reaction takes place in the presence of glutamine and ATP through an activated phospho-Asp-tRNA(Asn) or phospho-Glu-tRNA(Gln). The chain is Aspartyl/glutamyl-tRNA(Asn/Gln) amidotransferase subunit B from Myxococcus xanthus (strain DK1622).